The primary structure comprises 314 residues: Beta-lactamase 2 (314 aa).

The first 26 residues, 1–26 (MLHTRIRRATLGAVAALSLVPVMACG), serve as a signal peptide directing secretion. The span at 32–47 (DAAEPAGSAPSSSAAA) shows a compositional bias: low complexity. The tract at residues 32–51 (DAAEPAGSAPSSSAAAHKPG) is disordered. Residue Ser-96 is the Acyl-ester intermediate of the active site. 258–260 (KTG) is a substrate binding site.

The protein belongs to the class-A beta-lactamase family.

It catalyses the reaction a beta-lactam + H2O = a substituted beta-amino acid. This Streptomyces cacaoi protein is Beta-lactamase 2 (blaU).